A 154-amino-acid polypeptide reads, in one-letter code: MAARVCCQLDPARDVLCLRPVGAESRGRPVSGPFGTLPSPSSSAVPADHGAHLSLRGLFVCAFSSAGPCALRFTSARRMETTVNAHQVLPKVLHKRTLGLSAMSTTDLEAYFKDCLFKDWEELGEEIRLKVFVLGGCRHKLVCSPAPCNFFTSA.

The mitochondrial targeting sequence stretch occupies residues 68-117; the sequence is PCALRFTSARRMETTVNAHQVLPKVLHKRTLGLSAMSTTDLEAYFKDCLF.

It belongs to the orthohepadnavirus protein X family. In terms of assembly, may form homodimer. May interact with host CEBPA, CFLAR, CREB1, DDB1, E4F1, HBXIP, HSPD1/HSP60, NFKBIA, POLR2E and SMAD4. Interacts with host SMC5-SMC6 complex and induces its degradation. Interacts with host TRPC4AP; leading to prevent ubiquitination of TRPC4AP. Interacts with host PLSCR1; this interaction promotes ubiquitination and degradation of HBx and impairs HBx-mediated cell proliferation. Post-translationally, a fraction may be phosphorylated in insect cells and HepG2 cells, a human hepatoblastoma cell line. Phosphorylated in vitro by host protein kinase C or mitogen-activated protein kinase. N-acetylated in insect cells.

The protein resides in the host cytoplasm. The protein localises to the host nucleus. It is found in the host mitochondrion. Its function is as follows. Multifunctional protein that plays a role in silencing host antiviral defenses and promoting viral transcription. Does not seem to be essential for HBV infection. May be directly involved in development of cirrhosis and liver cancer (hepatocellular carcinoma). Most of cytosolic activities involve modulation of cytosolic calcium. The effect on apoptosis is controversial depending on the cell types in which the studies have been conducted. May induce apoptosis by localizing in mitochondria and causing loss of mitochondrial membrane potential. May also modulate apoptosis by binding host CFLAR, a key regulator of the death-inducing signaling complex (DISC). Promotes viral transcription by using the host E3 ubiquitin ligase DDB1 to target the SMC5-SMC6 complex to proteasomal degradation. This host complex would otherwise bind to viral episomal DNA, and prevents its transcription. Moderately stimulates transcription of many different viral and cellular transcription elements. Promoters and enhancers stimulated by HBx contain DNA binding sites for NF-kappa-B, AP-1, AP-2, c-EBP, ATF/CREB, or the calcium-activated factor NF-AT. In Hepatitis B virus genotype C subtype adr (strain Japan/adr4/1983) (HBV-C), this protein is Protein X.